We begin with the raw amino-acid sequence, 103 residues long: Truncated secreted TNF-receptor-like protein A53 (103 aa).

A TNFR-Cys 1 repeat occupies 36-73; the sequence is SCDKGEYLDKRHNQCCNRCPPGEFAKVRCNGNDNTKCE. Cystine bridges form between C37–C50, C51–C64, and C54–C72. The TNFR-Cys 2; truncated repeat unit spans residues 74–103; the sequence is RCPPHTYTTIPIILMDVINVENAQQDHLIR.

Belongs to the poxviridae A53R protein family.

The chain is Truncated secreted TNF-receptor-like protein A53 from Vaccinia virus (strain Copenhagen) (VACV).